Here is a 145-residue protein sequence, read N- to C-terminus: Flagellar assembly factor FliW (145 aa).

This sequence belongs to the FliW family. As to quaternary structure, interacts with translational regulator CsrA and flagellin(s).

It is found in the cytoplasm. In terms of biological role, acts as an anti-CsrA protein, binds CsrA and prevents it from repressing translation of its target genes, one of which is flagellin. Binds to flagellin and participates in the assembly of the flagellum. The protein is Flagellar assembly factor FliW of Exiguobacterium sp. (strain ATCC BAA-1283 / AT1b).